The sequence spans 365 residues: 3-methyl-L-tyrosine peroxygenase (365 aa).

Residue 313 to 317 coordinates heme; sequence HIGVC.

Heme serves as cofactor.

It carries out the reaction 3-methyl-L-tyrosine + H2O2 = 5-hydroxy-3-methyl-L-tyrosine + H2O. The protein operates within antibiotic biosynthesis. Functionally, heme-containing peroxygenase that mediates the hydroxylation of 3-methyl-L-tyrosine (3-Me-Tyr) into 3-hydroxy-5-methyl-L-tyrosine (3-OH-5-Me-Tyr) in biosynthesis of saframycin A, a potent antitumor antibiotic that belongs to the tetrahydroisoquinoline family. Involved in biosynthesis of 3-hydroxy-5-methyl-O-methyltyrosine (3-OH-5-Me-OMe-Tyr), a core structure of saframycin A. The polypeptide is 3-methyl-L-tyrosine peroxygenase (Streptomyces lavendulae).